Reading from the N-terminus, the 117-residue chain is Large ribosomal subunit protein bL20c (117 aa).

It belongs to the bacterial ribosomal protein bL20 family.

The protein resides in the plastid. Its subcellular location is the chloroplast. In terms of biological role, binds directly to 23S ribosomal RNA and is necessary for the in vitro assembly process of the 50S ribosomal subunit. It is not involved in the protein synthesizing functions of that subunit. In Lemna minor (Common duckweed), this protein is Large ribosomal subunit protein bL20c.